Consider the following 297-residue polypeptide: Homoserine kinase (297 aa).

Residue 82–92 participates in ATP binding; it reads PLTRGLGSSAS.

It belongs to the GHMP kinase family. Homoserine kinase subfamily.

It is found in the cytoplasm. The enzyme catalyses L-homoserine + ATP = O-phospho-L-homoserine + ADP + H(+). It participates in amino-acid biosynthesis; L-threonine biosynthesis; L-threonine from L-aspartate: step 4/5. In terms of biological role, catalyzes the ATP-dependent phosphorylation of L-homoserine to L-homoserine phosphate. This is Homoserine kinase from Bacillus mycoides (strain KBAB4) (Bacillus weihenstephanensis).